Reading from the N-terminus, the 189-residue chain is GTP cyclohydrolase 1 (189 aa).

Zn(2+) contacts are provided by Cys-76, His-79, and Cys-149.

It belongs to the GTP cyclohydrolase I family. As to quaternary structure, toroid-shaped homodecamer, composed of two pentamers of five dimers.

The enzyme catalyses GTP + H2O = 7,8-dihydroneopterin 3'-triphosphate + formate + H(+). The protein operates within cofactor biosynthesis; 7,8-dihydroneopterin triphosphate biosynthesis; 7,8-dihydroneopterin triphosphate from GTP: step 1/1. The polypeptide is GTP cyclohydrolase 1 (Dehalococcoides mccartyi (strain ATCC BAA-2266 / KCTC 15142 / 195) (Dehalococcoides ethenogenes (strain 195))).